We begin with the raw amino-acid sequence, 232 residues long: Large ribosomal subunit protein uL1 (232 aa).

It belongs to the universal ribosomal protein uL1 family. In terms of assembly, part of the 50S ribosomal subunit.

Binds directly to 23S rRNA. The L1 stalk is quite mobile in the ribosome, and is involved in E site tRNA release. Functionally, protein L1 is also a translational repressor protein, it controls the translation of the L11 operon by binding to its mRNA. The polypeptide is Large ribosomal subunit protein uL1 (Paraburkholderia phytofirmans (strain DSM 17436 / LMG 22146 / PsJN) (Burkholderia phytofirmans)).